Consider the following 397-residue polypeptide: Succinyl-diaminopimelate desuccinylase (397 aa).

His-73 is a Zn(2+) binding site. Asp-75 is a catalytic residue. Asp-106 is a Zn(2+) binding site. The active-site Proton acceptor is the Glu-140. Zn(2+) is bound by residues Glu-141, Glu-169, and His-366.

This sequence belongs to the peptidase M20A family. DapE subfamily. As to quaternary structure, homodimer. Zn(2+) serves as cofactor. It depends on Co(2+) as a cofactor.

The catalysed reaction is N-succinyl-(2S,6S)-2,6-diaminopimelate + H2O = (2S,6S)-2,6-diaminopimelate + succinate. It participates in amino-acid biosynthesis; L-lysine biosynthesis via DAP pathway; LL-2,6-diaminopimelate from (S)-tetrahydrodipicolinate (succinylase route): step 3/3. Catalyzes the hydrolysis of N-succinyl-L,L-diaminopimelic acid (SDAP), forming succinate and LL-2,6-diaminopimelate (DAP), an intermediate involved in the bacterial biosynthesis of lysine and meso-diaminopimelic acid, an essential component of bacterial cell walls. In Rhizobium meliloti (strain 1021) (Ensifer meliloti), this protein is Succinyl-diaminopimelate desuccinylase.